The chain runs to 307 residues: Ornithine carbamoyltransferase (307 aa).

Residues 50-53 (STRT), Gln-77, Arg-101, and 128-131 (HPCQ) each bind carbamoyl phosphate. L-ornithine contacts are provided by residues Asn-160, Asp-224, and 228 to 229 (SM). Carbamoyl phosphate-binding positions include 264–265 (CL) and Arg-292.

It belongs to the aspartate/ornithine carbamoyltransferase superfamily. OTCase family. As to quaternary structure, homotrimer.

It is found in the cytoplasm. The catalysed reaction is carbamoyl phosphate + L-ornithine = L-citrulline + phosphate + H(+). The protein operates within amino-acid biosynthesis; L-arginine biosynthesis; L-arginine from L-ornithine and carbamoyl phosphate: step 1/3. Its function is as follows. Reversibly catalyzes the transfer of the carbamoyl group from carbamoyl phosphate (CP) to the N(epsilon) atom of ornithine (ORN) to produce L-citrulline, which is a substrate for argininosuccinate synthetase, the enzyme involved in the final step in arginine biosynthesis. This Mycobacterium bovis (strain ATCC BAA-935 / AF2122/97) protein is Ornithine carbamoyltransferase (argF).